The primary structure comprises 309 residues: Tagatose-6-phosphate kinase (309 aa).

It belongs to the carbohydrate kinase PfkB family. LacC subfamily.

It carries out the reaction D-tagatofuranose 6-phosphate + ATP = D-tagatofuranose 1,6-bisphosphate + ADP + H(+). The protein operates within carbohydrate metabolism; D-tagatose 6-phosphate degradation; D-glyceraldehyde 3-phosphate and glycerone phosphate from D-tagatose 6-phosphate: step 1/2. The chain is Tagatose-6-phosphate kinase from Streptococcus sanguinis (strain SK36).